The chain runs to 530 residues: TNF receptor-associated factor 6 (530 aa).

The segment at 1–362 is interaction with TAX1BP1; that stretch reads MSLLNCENSC…EAQQCNGIYI (362 aa). The RING-type; degenerate zinc finger occupies 70-109; it reads CPICLMALREAVQTPCGHRFCKACITKSIRDAGHKCPVDN. A Glycyl lysine isopeptide (Lys-Gly) (interchain with G-Cter in SUMO); alternate cross-link involves residue lysine 124. Lysine 124 is covalently cross-linked (Glycyl lysine isopeptide (Lys-Gly) (interchain with G-Cter in ubiquitin); alternate). Lysine 142 is covalently cross-linked (Glycyl lysine isopeptide (Lys-Gly) (interchain with G-Cter in SUMO)). 2 TRAF-type zinc fingers span residues 150–202 and 203–259; these read DHQV…EEKE and IHDQ…NHLA. The stretch at 302-356 forms a coiled coil; sequence NYEETVKQLEGRLVRQDHQIRELTAKMETQSMHVSELKRTIRSLEDKVAEMEAQQ. Lysine 327 is covalently cross-linked (Glycyl lysine isopeptide (Lys-Gly) (interchain with G-Cter in ubiquitin)). The MATH domain occupies 358–507; it reads NGIYIWKIGN…DDTLLVRCEV (150 aa). Residues 363–530 form an interaction with TANK region; the sequence is WKIGNFGMHL…FQPRSTDAGV (168 aa). Lysine 461 is covalently cross-linked (Glycyl lysine isopeptide (Lys-Gly) (interchain with G-Cter in SUMO)).

Belongs to the TNF receptor-associated factor family. A subfamily. As to quaternary structure, homotrimer. Homooligomer. N-terminal region is dimeric while C-terminal region is trimeric; maybe providing a mode of oligomerization. Upon IL1B treatment, forms a complex with PELI1, IRAK1, IRAK4 and MYD88; this complex recruits MAP3K7/TAK1, TAB1 and TAB2 to mediate NF-kappa-B activation. Direct binding of SMAD6 to PELI1 prevents the complex formation and hence negatively regulates IL1R-TLR signaling and eventually NF-kappa-B-mediated gene expression. Binds to TNFRSF5/CD40 and TNFRSF11A/RANK. Associates with NGFR, TNFRSF17, IRAK2, IRAK3, RIPK2, MAP3K1, MAP3K5, MAP3K14, CSK, TRAF, TRAF-interacting protein TRIP and TNF receptor associated protein TDP2. Interacts with IL17R. Interacts with SQSTM1 bridging NTRK1 and NGFR. Forms a ternary complex with SQSTM1 and PRKCZ. Interacts with PELI2 and PELI3. Binds UBE2V1. Interacts with TAX1BP1; this interaction mediates deubiquitination of TRAF6 and inhibition of NF-kappa-B activation. Interacts with ZNF675. Interacts with ARRB1 and ARRB2. Interacts with MAP3K7 and TAB1/MAP3K7IP1; during IL-1 signaling. Interacts with UBE2N. Interacts with TGFBR1, HDAC1 and RANGAP1. Interacts with AKT1, AKT2 and AKT3. Interacts (via TRAF domains) with NUMBL (via C-terminal). Interacts with RBCK1. Interacts with LIMD1 (via LIM domains). Interacts with RSAD2/viperin. Interacts (via C-terminus) with EIF2AK2/PKR (via the kinase catalytic domain). Interacts with ZFAND5. Interacts with IL1RL1. Interacts with TRAFD1. Interacts with AJUBA. Interacts with MAVS/IPS1. Interacts (via TRAF domains) with DYNC2I2 (via WD domains). Interacts with IFIT3 (via N-terminus). Interacts with TICAM2. Interacts with CARD14. Interacts with CD40 and MAP3K8; the interaction is required for ERK activation. Interacts with TICAM1 and this interaction is enhanced in the presence of WDFY1. Interacts with TANK; this interaction increases in response to DNA damage. Interacts with USP10; this interaction increases in response to DNA damage. Interacts with ZC3H12A; this interaction increases in response to DNA damage and is stimulated by TANK. Interacts with WDFY3. Interacts with TRIM13. Interacts with GPS2. Interacts (via C-terminus) with SASH1. Interacts with LRRC19. Interacts with IL17RA and TRAF3IP2. Interacts with TOMM70. Interacts with AMBRA1; interaction is required to mediate 'Lys-63'-linked ubiquitination of ULK1. Interacts with CRBN; this interaction inhibits TLR4-mediated signaling by preventing TRAF6-mediated ubiquitination of ECSIT. In terms of processing, sumoylated on Lys-124, Lys-142 and Lys-461 with SUMO1. Polyubiquitinated on Lys-124 by TRAF3IP2; after cell stimulation with IL17A. Polyubiquitinated; after cell stimulation with IL1B or TGFB. This ligand-induced cell stimulation leads to dimerization/oligomerization of TRAF6 molecules, followed by auto-ubiquitination which involves UBE2N and UBE2V1 and leads to TRAF6 activation. This 'Lys-63' site-specific poly-ubiquitination appears to be associated with the activation of signaling molecules. Endogenous autoubiquitination occurs only for the cytoplasmic form. Deubiquitinated by USP10 in a TANK-dependent manner, leading to the negative regulation of NF-kappa-B signaling upon DNA damage. LRRC19 induces 'Lys-63' ubiquitination. Ubiquitinated at Lys-327 by the SCF(FBXL2) complex, leading to its degradation by the proteasome.

It is found in the cytoplasm. It localises to the cell cortex. Its subcellular location is the nucleus. The protein localises to the lipid droplet. It catalyses the reaction S-ubiquitinyl-[E2 ubiquitin-conjugating enzyme]-L-cysteine + [acceptor protein]-L-lysine = [E2 ubiquitin-conjugating enzyme]-L-cysteine + N(6)-ubiquitinyl-[acceptor protein]-L-lysine.. It functions in the pathway protein modification; protein ubiquitination. E3 ubiquitin ligase that, together with UBE2N and UBE2V1, mediates the synthesis of 'Lys-63'-linked-polyubiquitin chains conjugated to proteins, such as ECSIT, IKBKG, IRAK1, AKT1 and AKT2. Also mediates ubiquitination of free/unanchored polyubiquitin chain that leads to MAP3K7 activation. Leads to the activation of NF-kappa-B and JUN. Seems to also play a role in dendritic cells (DCs) maturation and/or activation. Represses c-Myb-mediated transactivation, in B-lymphocytes. Adapter protein that seems to play a role in signal transduction initiated via TNF receptor, IL-1 receptor and IL-17 receptor. Regulates osteoclast differentiation by mediating the activation of adapter protein complex 1 (AP-1) and NF-kappa-B, in response to RANK-L stimulation. Together with MAP3K8, mediates CD40 signals that activate ERK in B-cells and macrophages, and thus may play a role in the regulation of immunoglobulin production. Acts as a regulator of the JNK and NF-kappa-B signaling pathways by initiating assembly of heterotypic 'Lys-63'-/'Lys-48'-linked branched ubiquitin chains that are then recognized by TAB2: TRAF6 catalyzes initial 'Lys-63'-linked-polyubiquitin chains that are then branched via 'Lys-48'-linked polyubiquitin by HUWE1. 'Lys-63'-/'Lys-48'-linked branched ubiquitin chains protect 'Lys-63'-linkages from CYLD deubiquitination. Also participates in the TCR signaling by ubiquitinating LAT. This chain is TNF receptor-associated factor 6 (Traf6), found in Rattus norvegicus (Rat).